The sequence spans 586 residues: Merlin (586 aa).

Ser9 carries the phosphoserine modification. Residues 18–307 form the FERM domain; it reads FTVRIVTMDA…GNHDLFMRRR (290 aa). The disordered stretch occupies residues 325-354; sequence KARKQMERQRLAREKQMREEAERSRDEPER. Residue Ser514 is modified to Phosphoserine; by PAK. Residues 557-586 are disordered; that stretch reads LHSEHSDSGTSSKHNTIKKPQAQGRRPICI.

As to quaternary structure, interacts with NHERF1, HGS and AGAP2. Interacts with SGSM3. Interacts (via FERM domain) with MPP1. Interacts with LAYN and WWC1. Interacts with the CUL4A-RBX1-DDB1-VprBP/DCAF1 E3 ubiquitin-protein ligase complex. The unphosphorylated form interacts (via FERM domain) with VPRBP/DCAF1. Interacts (via FERM domain) with NOP53; the interaction is direct. Interacts with SCHIP1; the interaction is direct. Ubiquitinated by the CUL4A-RBX1-DDB1-DCAF1/VprBP E3 ubiquitin-protein ligase complex for ubiquitination and subsequent proteasome-dependent degradation. Post-translationally, phosphorylation of Ser-514 inhibits nuclear localization by disrupting the intramolecular association of the FERM domain with the C-terminal tail. The dephosphorylation of Ser-514 favors the interaction with NOP53.

It localises to the cell membrane. The protein localises to the cell projection. The protein resides in the cytoplasm. Its subcellular location is the cytoskeleton. It is found in the nucleus. Its function is as follows. Probable regulator of the Hippo/SWH (Sav/Wts/Hpo) signaling pathway, a signaling pathway that plays a pivotal role in tumor suppression by restricting proliferation and promoting apoptosis. Along with WWC1 can synergistically induce the phosphorylation of LATS1 and LATS2 and can probably function in the regulation of the Hippo/SWH (Sav/Wts/Hpo) signaling pathway. May act as a membrane stabilizing protein. May inhibit PI3 kinase by binding to AGAP2 and impairing its stimulating activity. Suppresses cell proliferation and tumorigenesis by inhibiting the CUL4A-RBX1-DDB1-VprBP/DCAF1 E3 ubiquitin-protein ligase complex Plays a role in lens development and is required for complete fiber cell terminal differentiation, maintenance of cell polarity and separation of the lens vesicle from the corneal epithelium. The polypeptide is Merlin (Nf2) (Rattus norvegicus (Rat)).